A 193-amino-acid polypeptide reads, in one-letter code: Putative manganese efflux pump MntP (193 aa).

A run of 6 helical transmembrane segments spans residues 3–23, 37–57, 66–86, 109–131, 146–166, and 171–191; these read PLSI…AAIG, VRAG…GWML, AAFD…HMIV, LALA…SLAF, CTLS…ALIG, and ILGG…HLSG.

It belongs to the MntP (TC 9.B.29) family.

The protein localises to the cell inner membrane. In terms of biological role, probably functions as a manganese efflux pump. In Xanthomonas campestris pv. campestris (strain 8004), this protein is Putative manganese efflux pump MntP.